We begin with the raw amino-acid sequence, 333 residues long: Ribosomal RNA small subunit methyltransferase H (333 aa).

S-adenosyl-L-methionine-binding positions include 39–41 (GGY), aspartate 57, phenylalanine 84, aspartate 101, and glutamine 108.

Belongs to the methyltransferase superfamily. RsmH family.

It is found in the cytoplasm. The catalysed reaction is cytidine(1402) in 16S rRNA + S-adenosyl-L-methionine = N(4)-methylcytidine(1402) in 16S rRNA + S-adenosyl-L-homocysteine + H(+). Functionally, specifically methylates the N4 position of cytidine in position 1402 (C1402) of 16S rRNA. The chain is Ribosomal RNA small subunit methyltransferase H from Dinoroseobacter shibae (strain DSM 16493 / NCIMB 14021 / DFL 12).